Consider the following 284-residue polypeptide: MLLATFKLCAGSSYRHMRNMKGLRHQAVLAIGQELNRRALGDPSPGWMGQVRRRSSLLGSQLEATLYSDQELSYIQQGEEAMQKALGILNNQEGWKKESQQENGDEVLSKVVPGVGKVFRLEVLLDQPMDRLYEELVDRMEAMGEWNPNVKEIKVLKKIGKDTVITHELAAAAAGNLVGPRDFVSVRCTKRRGSTCVLAGMATHFGEMPEQSGVIRAEHGPTCMVLHPLAGSPSKTKLTWLLSIDLKGWLPKTIINQVLSQTQIEFASHLRKRLESSPASEAQC.

The N-terminal 62 residues, 1-62, are a transit peptide targeting the mitochondrion; the sequence is MLLATFKLCA…RRSSLLGSQL (62 aa). Phosphoserine; by PKA is present on residues serine 56 and serine 194. The START domain maps to 66-279; the sequence is LYSDQELSYI…LRKRLESSPA (214 aa).

As to quaternary structure, may interact with TSPO.

It localises to the mitochondrion. It carries out the reaction cholesterol(in) = cholesterol(out). Its pathway is steroid metabolism; cholesterol metabolism. Plays a key role in steroid hormone synthesis by enhancing the metabolism of cholesterol into pregnenolone. Mediates the transfer of cholesterol from the outer mitochondrial membrane to the inner mitochondrial membrane where it is cleaved to pregnenolone. In Rattus norvegicus (Rat), this protein is Steroidogenic acute regulatory protein, mitochondrial (Star).